Reading from the N-terminus, the 166-residue chain is NAD(P)H-quinone oxidoreductase subunit I, chloroplastic (166 aa).

2 4Fe-4S ferredoxin-type domains span residues G55–K84 and L95–E124. C64, C67, C70, C74, C104, C107, C110, and C114 together coordinate [4Fe-4S] cluster.

This sequence belongs to the complex I 23 kDa subunit family. In terms of assembly, NDH is composed of at least 16 different subunits, 5 of which are encoded in the nucleus. It depends on [4Fe-4S] cluster as a cofactor.

The protein resides in the plastid. It is found in the chloroplast thylakoid membrane. The catalysed reaction is a plastoquinone + NADH + (n+1) H(+)(in) = a plastoquinol + NAD(+) + n H(+)(out). It catalyses the reaction a plastoquinone + NADPH + (n+1) H(+)(in) = a plastoquinol + NADP(+) + n H(+)(out). In terms of biological role, NDH shuttles electrons from NAD(P)H:plastoquinone, via FMN and iron-sulfur (Fe-S) centers, to quinones in the photosynthetic chain and possibly in a chloroplast respiratory chain. The immediate electron acceptor for the enzyme in this species is believed to be plastoquinone. Couples the redox reaction to proton translocation, and thus conserves the redox energy in a proton gradient. The chain is NAD(P)H-quinone oxidoreductase subunit I, chloroplastic from Pentanema britannica (British yellowhead).